Consider the following 803-residue polypeptide: Ubiquitin carboxyl-terminal hydrolase 45 (803 aa).

The disordered stretch occupies residues 1 to 34 (MRLKDPFSLKTADMTKRSNKPKKPRDEDSSDEVG). The segment at 36–153 (LTCQHVSRAV…QTLDFLQKQS (118 aa)) adopts a UBP-type zinc-finger fold. Cysteine 38, histidine 40, cysteine 62, cysteine 65, cysteine 85, cysteine 88, cysteine 93, histidine 100, histidine 104, histidine 113, cysteine 126, and cysteine 129 together coordinate Zn(2+). The 611-residue stretch at 192–802 (KGINNLGNTC…QAYLLFYEEL (611 aa)) folds into the USP domain. The Nucleophile role is filled by cysteine 201. Residues 394 to 554 (PTNPARLGKS…LPSIRPQQGG (161 aa)) form a disordered region. The segment covering 403–417 (SGREQDSLTSHDDSL) has biased composition (basic and acidic residues). Polar residues-rich tracts occupy residues 419–440 (AHSQANRNSRRLSGQKLQSRHS) and 469–480 (SYRTDTMGSQSD). Residues 502–531 (SEWSPRIPSVSSHSSTSDKTSITTTLSTTT) are compositionally biased toward low complexity. A compositionally biased stretch (polar residues) spans 532–545 (HNPSLKSNPSSTPL). Histidine 739 (proton acceptor) is an active-site residue.

This sequence belongs to the peptidase C19 family. Retina.

It is found in the photoreceptor inner segment. The protein resides in the cytoplasm. The protein localises to the nucleus. The enzyme catalyses Thiol-dependent hydrolysis of ester, thioester, amide, peptide and isopeptide bonds formed by the C-terminal Gly of ubiquitin (a 76-residue protein attached to proteins as an intracellular targeting signal).. Catalyzes the deubiquitination of SPDL1. Plays a role in the repair of UV-induced DNA damage via deubiquitination of ERCC1, promoting its recruitment to DNA damage sites. May be involved in the maintenance of photoreceptor function. May play a role in normal retinal development. The polypeptide is Ubiquitin carboxyl-terminal hydrolase 45 (Danio rerio (Zebrafish)).